The chain runs to 297 residues: MYLKLLQSCNRLHPRAWDFIQLMRLDKPIGTYLLLWPTLWALWIAAEGVPSAKNLFIFITGVILMRAAGCVVNDFADRNFDGHVQRTQARPMAAGRVSSREAWTLFAVLVGLSFGLVLLTNATTVYLSFGALALAACYPFMKRYTFYPQVVLGAAFSWGMPMAFTAETGSLPPEAWLLFIANLLWTVAYDTYYAMADRDDDLKIGIKSTAILFGEADRVIIVTLQGLALFCLLLAGVRFELGQWFHLGLVIAAGCFAWEFWKTQSRKPQVCFKAFLHNHWAGLAILAGIVLDYATKA.

The next 9 helical transmembrane spans lie at 29-49 (IGTY…AEGV), 55-75 (LFIF…VNDF), 102-122 (AWTL…LTNA), 124-141 (TVYL…YPFM), 146-166 (FYPQ…AFTA), 169-189 (GSLP…TVAY), 219-239 (VIIV…GVRF), 241-261 (LGQW…WEFW), and 270-290 (VCFK…AGIV).

The protein belongs to the UbiA prenyltransferase family. Requires Mg(2+) as cofactor.

The protein localises to the cell inner membrane. It carries out the reaction all-trans-octaprenyl diphosphate + 4-hydroxybenzoate = 4-hydroxy-3-(all-trans-octaprenyl)benzoate + diphosphate. It functions in the pathway cofactor biosynthesis; ubiquinone biosynthesis. Its function is as follows. Catalyzes the prenylation of para-hydroxybenzoate (PHB) with an all-trans polyprenyl group. Mediates the second step in the final reaction sequence of ubiquinone-8 (UQ-8) biosynthesis, which is the condensation of the polyisoprenoid side chain with PHB, generating the first membrane-bound Q intermediate 3-octaprenyl-4-hydroxybenzoate. The protein is 4-hydroxybenzoate octaprenyltransferase of Stutzerimonas stutzeri (strain A1501) (Pseudomonas stutzeri).